The primary structure comprises 456 residues: UDP-N-acetylmuramate--L-alanine ligase (456 aa).

Position 112 to 118 (112 to 118 (GAHGKTT)) interacts with ATP.

This sequence belongs to the MurCDEF family.

The protein localises to the cytoplasm. The enzyme catalyses UDP-N-acetyl-alpha-D-muramate + L-alanine + ATP = UDP-N-acetyl-alpha-D-muramoyl-L-alanine + ADP + phosphate + H(+). It participates in cell wall biogenesis; peptidoglycan biosynthesis. Functionally, cell wall formation. The protein is UDP-N-acetylmuramate--L-alanine ligase of Desulfatibacillum aliphaticivorans.